A 113-amino-acid chain; its full sequence is Hydrogenase maturation factor HypA (113 aa).

His2 provides a ligand contact to Ni(2+). Zn(2+) is bound by residues Cys73, Cys76, Cys89, and Cys92.

This sequence belongs to the HypA/HybF family.

Functionally, involved in the maturation of [NiFe] hydrogenases. Required for nickel insertion into the metal center of the hydrogenase. The polypeptide is Hydrogenase maturation factor HypA (Azorhizobium caulinodans (strain ATCC 43989 / DSM 5975 / JCM 20966 / LMG 6465 / NBRC 14845 / NCIMB 13405 / ORS 571)).